The chain runs to 507 residues: Beta-Ala-His dipeptidase (507 aa).

The signal sequence occupies residues 1–26; the sequence is MDPKLGRMAASLLAVLLLLLERGMFS. Residue H132 coordinates Zn(2+). D134 is a catalytic residue. D165 is a binding site for Zn(2+). E199 functions as the Proton acceptor in the catalytic mechanism. E200 provides a ligand contact to Zn(2+). S219 carries the post-translational modification Phosphoserine. Position 228 (D228) interacts with Zn(2+). Residues N322 and N382 are each glycosylated (N-linked (GlcNAc...) asparagine). H478 contacts Zn(2+).

It belongs to the peptidase M20A family. As to quaternary structure, homodimer. Zn(2+) serves as cofactor. As to expression, found in serum and adult nervous central system. Absent in serum from patients with homocarnosinosis.

The protein localises to the secreted. It carries out the reaction Preferential hydrolysis of the beta-Ala-|-His dipeptide (carnosine), and also anserine, Xaa-|-His dipeptides and other dipeptides including homocarnosine.. It catalyses the reaction carnosine + H2O = beta-alanine + L-histidine. The catalysed reaction is anserine + H2O = N(pros)-methyl-L-histidine + beta-alanine. The enzyme catalyses L-alanyl-L-histidine + H2O = L-histidine + L-alanine. It carries out the reaction glycyl-L-histidine + H2O = L-histidine + glycine. It catalyses the reaction L-homocarnosine + H2O = 4-aminobutanoate + L-histidine. With respect to regulation, activated by cadmium ions. Inhibited by the metal chelator 1,10-o-phenantrolin. The inhibitory concentration 50% (IC(50)) is 5 uM. In terms of biological role, catalyzes the peptide bond hydrolysis in Xaa-His dipeptides, displaying the highest activity toward carnosine (beta-alanyl-L-histidine) and anserine (beta-alanyl-3-methyl-histidine). This is Beta-Ala-His dipeptidase from Homo sapiens (Human).